An 87-amino-acid polypeptide reads, in one-letter code: Acyl-CoA-binding protein (87 aa).

An ACB domain is found at 3 to 87; it reads LKEEFEEHAV…KVKQLLEESA (85 aa). An acyl-CoA is bound by residues 30–34, Lys-56, and Tyr-75; that span reads YGLYK.

Belongs to the ACBP family.

Binds medium- and long-chain acyl-CoA esters with very high affinity and may function as an intracellular carrier of acyl-CoA esters. This is Acyl-CoA-binding protein (ACABP) from Fritillaria agrestis (Stinkbells).